A 452-amino-acid chain; its full sequence is Oxygen-independent coproporphyrinogen III oxidase (452 aa).

Residues 45–278 (LDPAVPISVY…ANLAAKMFTE (234 aa)) enclose the Radical SAM core domain. Y54 provides a ligand contact to S-adenosyl-L-methionine. [4Fe-4S] cluster is bound by residues C60 and C64. F66 is an S-adenosyl-L-methionine binding site. Residue C67 coordinates [4Fe-4S] cluster. S-adenosyl-L-methionine contacts are provided by residues G111, 112–113 (GT), E144, Q171, R183, D208, A242, and I328.

It belongs to the anaerobic coproporphyrinogen-III oxidase family. Monomer. [4Fe-4S] cluster is required as a cofactor.

Its subcellular location is the cytoplasm. The enzyme catalyses coproporphyrinogen III + 2 S-adenosyl-L-methionine = protoporphyrinogen IX + 2 5'-deoxyadenosine + 2 L-methionine + 2 CO2. It participates in porphyrin-containing compound metabolism; protoporphyrin-IX biosynthesis; protoporphyrinogen-IX from coproporphyrinogen-III (AdoMet route): step 1/1. Its function is as follows. Involved in the heme and chlorophyll biosynthesis. Catalyzes the anaerobic oxidative decarboxylation of propionate groups of rings A and B of coproporphyrinogen III to yield the vinyl groups in protoporphyrinogen IX. This Cereibacter sphaeroides (strain ATCC 17025 / ATH 2.4.3) (Rhodobacter sphaeroides) protein is Oxygen-independent coproporphyrinogen III oxidase (hemN).